A 498-amino-acid polypeptide reads, in one-letter code: NAD(P)H-quinone oxidoreductase subunit 2, chloroplastic (498 aa).

A run of 14 helical transmembrane segments spans residues 18–38 (LTIL…VIDL), 51–71 (ISMV…GFFT), 87–107 (FFLL…ILCS), 111–131 (LAEF…LSCA), 134–154 (LVTI…LSGY), 168–188 (FLLM…LLYG), 211–231 (IIYL…SLFP), 244–264 (PTPV…ALFT), 278–298 (WHVA…LIAV), 306–326 (MLAF…LSAD), 337–357 (YTFI…LFGL), 379–399 (FSLV…GFFG), 411–431 (GLYS…YYYL), and 470–490 (IAMI…DPII).

The protein belongs to the complex I subunit 2 family. As to quaternary structure, NDH is composed of at least 16 different subunits, 5 of which are encoded in the nucleus.

It is found in the plastid. The protein resides in the chloroplast thylakoid membrane. It catalyses the reaction a plastoquinone + NADH + (n+1) H(+)(in) = a plastoquinol + NAD(+) + n H(+)(out). The enzyme catalyses a plastoquinone + NADPH + (n+1) H(+)(in) = a plastoquinol + NADP(+) + n H(+)(out). NDH shuttles electrons from NAD(P)H:plastoquinone, via FMN and iron-sulfur (Fe-S) centers, to quinones in the photosynthetic chain and possibly in a chloroplast respiratory chain. The immediate electron acceptor for the enzyme in this species is believed to be plastoquinone. Couples the redox reaction to proton translocation, and thus conserves the redox energy in a proton gradient. In Adiantum capillus-veneris (Maidenhair fern), this protein is NAD(P)H-quinone oxidoreductase subunit 2, chloroplastic.